The primary structure comprises 282 residues: 4-diphosphocytidyl-2-C-methyl-D-erythritol kinase (282 aa).

Lysine 12 is a catalytic residue. Position 95–105 (95–105 (PMGGGIGGGSS)) interacts with ATP. Aspartate 137 is a catalytic residue.

This sequence belongs to the GHMP kinase family. IspE subfamily.

The catalysed reaction is 4-CDP-2-C-methyl-D-erythritol + ATP = 4-CDP-2-C-methyl-D-erythritol 2-phosphate + ADP + H(+). It functions in the pathway isoprenoid biosynthesis; isopentenyl diphosphate biosynthesis via DXP pathway; isopentenyl diphosphate from 1-deoxy-D-xylulose 5-phosphate: step 3/6. Its function is as follows. Catalyzes the phosphorylation of the position 2 hydroxy group of 4-diphosphocytidyl-2C-methyl-D-erythritol. The polypeptide is 4-diphosphocytidyl-2-C-methyl-D-erythritol kinase (Pseudomonas aeruginosa (strain ATCC 15692 / DSM 22644 / CIP 104116 / JCM 14847 / LMG 12228 / 1C / PRS 101 / PAO1)).